Here is a 101-residue protein sequence, read N- to C-terminus: Small ribosomal subunit protein uS14 (101 aa).

The protein belongs to the universal ribosomal protein uS14 family. Part of the 30S ribosomal subunit. Contacts proteins S3 and S10.

Its function is as follows. Binds 16S rRNA, required for the assembly of 30S particles and may also be responsible for determining the conformation of the 16S rRNA at the A site. The polypeptide is Small ribosomal subunit protein uS14 (Photobacterium profundum (strain SS9)).